Reading from the N-terminus, the 299-residue chain is F-actin-capping protein subunit alpha-3 (299 aa).

Residues Ser-2 and Ser-290 each carry the phosphoserine modification.

Belongs to the F-actin-capping protein alpha subunit family. Component of the F-actin capping complex, composed of a heterodimer of an alpha and a beta subunit. Component of the WASH complex, composed of F-actin-capping protein subunit alpha (CAPZA1, CAPZA2 or CAPZA3), F-actin-capping protein subunit beta (CAPZB), WASHC1, WASHC2, WASHC3, WASHC4 and WASHC5. As to expression, exclusively expressed in the testis.

It is found in the cytoplasm. The protein resides in the cytoskeleton. In terms of biological role, F-actin-capping proteins bind in a Ca(2+)-independent manner to the fast growing ends of actin filaments (barbed end) thereby blocking the exchange of subunits at these ends. Unlike other capping proteins (such as gelsolin and severin), these proteins do not sever actin filaments. May play a role in the morphogenesis of spermatid. In Rattus norvegicus (Rat), this protein is F-actin-capping protein subunit alpha-3 (Capza3).